A 395-amino-acid chain; its full sequence is Acetylornithine aminotransferase (395 aa).

Pyridoxal 5'-phosphate-binding positions include 117–118 (GA) and Phe-144. Arg-147 is a N(2)-acetyl-L-ornithine binding site. 230–233 (DEVQ) is a binding site for pyridoxal 5'-phosphate. N6-(pyridoxal phosphate)lysine is present on Lys-259. A N(2)-acetyl-L-ornithine-binding site is contributed by Ser-285. Position 286 (Thr-286) interacts with pyridoxal 5'-phosphate.

It belongs to the class-III pyridoxal-phosphate-dependent aminotransferase family. ArgD subfamily. In terms of assembly, homodimer. Pyridoxal 5'-phosphate is required as a cofactor.

The protein resides in the cytoplasm. The enzyme catalyses N(2)-acetyl-L-ornithine + 2-oxoglutarate = N-acetyl-L-glutamate 5-semialdehyde + L-glutamate. Its pathway is amino-acid biosynthesis; L-arginine biosynthesis; N(2)-acetyl-L-ornithine from L-glutamate: step 4/4. In Methanosarcina acetivorans (strain ATCC 35395 / DSM 2834 / JCM 12185 / C2A), this protein is Acetylornithine aminotransferase.